We begin with the raw amino-acid sequence, 275 residues long: Dermonecrotic toxin SpaSicTox-betaIIA1 (275 aa).

His-5 is an active-site residue. Mg(2+)-binding residues include Glu-25 and Asp-27. His-41 acts as the Nucleophile in catalysis. 2 cysteine pairs are disulfide-bonded: Cys-45/Cys-51 and Cys-47/Cys-190. Residue Asp-85 coordinates Mg(2+).

Belongs to the arthropod phospholipase D family. Class II subfamily. Mg(2+) is required as a cofactor. In terms of tissue distribution, expressed by the venom gland.

The protein resides in the secreted. The catalysed reaction is an N-(acyl)-sphingosylphosphocholine = an N-(acyl)-sphingosyl-1,3-cyclic phosphate + choline. The enzyme catalyses an N-(acyl)-sphingosylphosphoethanolamine = an N-(acyl)-sphingosyl-1,3-cyclic phosphate + ethanolamine. It catalyses the reaction a 1-acyl-sn-glycero-3-phosphocholine = a 1-acyl-sn-glycero-2,3-cyclic phosphate + choline. It carries out the reaction a 1-acyl-sn-glycero-3-phosphoethanolamine = a 1-acyl-sn-glycero-2,3-cyclic phosphate + ethanolamine. In terms of biological role, dermonecrotic toxins cleave the phosphodiester linkage between the phosphate and headgroup of certain phospholipids (sphingolipid and lysolipid substrates), forming an alcohol (often choline) and a cyclic phosphate. This toxin acts on sphingomyelin (SM). It may also act on ceramide phosphoethanolamine (CPE), lysophosphatidylcholine (LPC) and lysophosphatidylethanolamine (LPE), but not on lysophosphatidylserine (LPS), and lysophosphatidylglycerol (LPG). It acts by transphosphatidylation, releasing exclusively cyclic phosphate products as second products. Induces dermonecrosis, hemolysis, increased vascular permeability, edema, inflammatory response, and platelet aggregation. This is Dermonecrotic toxin SpaSicTox-betaIIA1 from Sicarius patagonicus (Six-eyed sand spider).